A 62-amino-acid chain; its full sequence is Bacteriocin piscicolin-126 (62 aa).

The propeptide occupies 1–18 (MKTVKELSVKEMQLTTGG). C27 and C32 are oxidised to a cystine.

It is found in the secreted. Inhibits the growth of several Gram-positive bacteria, especially the food-borne pathogen L.monocytogenes, but has no effect on the growth of a number of yeasts and Gram-negative bacteria. The polypeptide is Bacteriocin piscicolin-126 (pisA) (Carnobacterium maltaromaticum (Carnobacterium piscicola)).